The primary structure comprises 343 residues: Protein RecA (343 aa).

65 to 72 contacts ATP; it reads GPESSGKT.

The protein belongs to the RecA family.

The protein localises to the cytoplasm. Functionally, can catalyze the hydrolysis of ATP in the presence of single-stranded DNA, the ATP-dependent uptake of single-stranded DNA by duplex DNA, and the ATP-dependent hybridization of homologous single-stranded DNAs. It interacts with LexA causing its activation and leading to its autocatalytic cleavage. The protein is Protein RecA of Xanthomonas campestris pv. campestris (strain 8004).